Reading from the N-terminus, the 251-residue chain is Malonyl-[acyl-carrier protein] O-methyltransferase (251 aa).

It belongs to the methyltransferase superfamily.

It catalyses the reaction malonyl-[ACP] + S-adenosyl-L-methionine = malonyl-[ACP] methyl ester + S-adenosyl-L-homocysteine. It functions in the pathway cofactor biosynthesis; biotin biosynthesis. In terms of biological role, converts the free carboxyl group of a malonyl-thioester to its methyl ester by transfer of a methyl group from S-adenosyl-L-methionine (SAM). It allows to synthesize pimeloyl-ACP via the fatty acid synthetic pathway. This chain is Malonyl-[acyl-carrier protein] O-methyltransferase, found in Salmonella typhimurium (strain LT2 / SGSC1412 / ATCC 700720).